The chain runs to 549 residues: Glucose-6-phosphate isomerase (549 aa).

Glutamate 355 (proton donor) is an active-site residue. Residues histidine 386 and lysine 514 contribute to the active site.

The protein belongs to the GPI family.

Its subcellular location is the cytoplasm. The enzyme catalyses alpha-D-glucose 6-phosphate = beta-D-fructose 6-phosphate. It functions in the pathway carbohydrate biosynthesis; gluconeogenesis. It participates in carbohydrate degradation; glycolysis; D-glyceraldehyde 3-phosphate and glycerone phosphate from D-glucose: step 2/4. In terms of biological role, catalyzes the reversible isomerization of glucose-6-phosphate to fructose-6-phosphate. The sequence is that of Glucose-6-phosphate isomerase from Enterobacter sp. (strain 638).